Here is a 288-residue protein sequence, read N- to C-terminus: Probable aquaporin PIP1-2 (288 aa).

Residues 1 to 37 (MEGKEEDVRLGANKFSERQPIGTAAQGSDDKDYKEPP) form a disordered region. 2 helical membrane-spanning segments follow: residues 57-77 (IAEF…VMGV) and 92-114 (IAWS…SGGH). The NPA 1 signature appears at 116-118 (NPA). Transmembrane regions (helical) follow at residues 135 to 155 (LFYM…VKGF), 177 to 197 (GDGL…VFSA), and 211 to 231 (ILAP…TIPI). Positions 237 to 239 (NPA) match the NPA 2 motif. A helical membrane pass occupies residues 259–279 (IFWVGPFIGAALAAIYHQVVI).

It belongs to the MIP/aquaporin (TC 1.A.8) family. PIP (TC 1.A.8.11) subfamily. As to expression, expressed in roots, leaves and anthers.

The protein resides in the cell membrane. In terms of biological role, aquaporins facilitate the transport of water and small neutral solutes across cell membranes. The protein is Probable aquaporin PIP1-2 (PIP1-2) of Oryza sativa subsp. japonica (Rice).